A 149-amino-acid polypeptide reads, in one-letter code: FKBP-type 16 kDa peptidyl-prolyl cis-trans isomerase (149 aa).

The PPIase FKBP-type domain maps to 2-72; it reads SESVQSNSAV…FSLEPDAAFG (71 aa).

It belongs to the FKBP-type PPIase family.

The catalysed reaction is [protein]-peptidylproline (omega=180) = [protein]-peptidylproline (omega=0). PPIases accelerate the folding of proteins. Substrate specificity carried out with 'Suc-Ala-Xaa-Pro-Phe-4-nitroanilide', where Xaa is the amino acid tested, was found to be Phe &gt; Leu &gt;&gt; Ile &gt; Lys = Ala &gt; Trp &gt; His &gt;&gt; Gln. This chain is FKBP-type 16 kDa peptidyl-prolyl cis-trans isomerase (fkpB), found in Escherichia coli O6:H1 (strain CFT073 / ATCC 700928 / UPEC).